Here is a 481-residue protein sequence, read N- to C-terminus: Glutamyl-tRNA(Gln) amidotransferase subunit A (481 aa).

Active-site charge relay system residues include Lys78 and Ser153. Ser177 acts as the Acyl-ester intermediate in catalysis.

This sequence belongs to the amidase family. GatA subfamily. Heterotrimer of A, B and C subunits.

It catalyses the reaction L-glutamyl-tRNA(Gln) + L-glutamine + ATP + H2O = L-glutaminyl-tRNA(Gln) + L-glutamate + ADP + phosphate + H(+). Its function is as follows. Allows the formation of correctly charged Gln-tRNA(Gln) through the transamidation of misacylated Glu-tRNA(Gln) in organisms which lack glutaminyl-tRNA synthetase. The reaction takes place in the presence of glutamine and ATP through an activated gamma-phospho-Glu-tRNA(Gln). The protein is Glutamyl-tRNA(Gln) amidotransferase subunit A of Borreliella afzelii (strain PKo) (Borrelia afzelii).